A 551-amino-acid chain; its full sequence is Membrane protein insertase YidC (551 aa).

Residues Ala3–Gly23 traverse the membrane as a helical segment. The segment at Asn33–Asn55 is disordered. The next 3 membrane-spanning stretches (helical) occupy residues Leu361–Tyr381, Leu431–Leu451, and Val504–Val524.

The protein belongs to the OXA1/ALB3/YidC family. Type 1 subfamily. In terms of assembly, interacts with the Sec translocase complex via SecD. Specifically interacts with transmembrane segments of nascent integral membrane proteins during membrane integration.

The protein resides in the cell inner membrane. Its function is as follows. Required for the insertion and/or proper folding and/or complex formation of integral membrane proteins into the membrane. Involved in integration of membrane proteins that insert both dependently and independently of the Sec translocase complex, as well as at least some lipoproteins. Aids folding of multispanning membrane proteins. In Francisella tularensis subsp. holarctica (strain OSU18), this protein is Membrane protein insertase YidC.